A 473-amino-acid chain; its full sequence is Ribulose bisphosphate carboxylase large chain (473 aa).

The substrate site is built by Asn116 and Thr166. The active-site Proton acceptor is Lys168. Lys170 serves as a coordination point for substrate. Mg(2+) contacts are provided by Lys194, Asp196, and Glu197. Position 194 is an N6-carboxylysine (Lys194). The active-site Proton acceptor is the His287. Substrate-binding residues include Arg288, His320, and Ser372.

The protein belongs to the RuBisCO large chain family. Type I subfamily. In terms of assembly, heterohexadecamer of 8 large chains and 8 small chains. It depends on Mg(2+) as a cofactor.

It catalyses the reaction 2 (2R)-3-phosphoglycerate + 2 H(+) = D-ribulose 1,5-bisphosphate + CO2 + H2O. The catalysed reaction is D-ribulose 1,5-bisphosphate + O2 = 2-phosphoglycolate + (2R)-3-phosphoglycerate + 2 H(+). Functionally, ruBisCO catalyzes two reactions: the carboxylation of D-ribulose 1,5-bisphosphate, the primary event in carbon dioxide fixation, as well as the oxidative fragmentation of the pentose substrate. Both reactions occur simultaneously and in competition at the same active site. The protein is Ribulose bisphosphate carboxylase large chain of Nitrosomonas sp. (strain ENI-11).